A 278-amino-acid chain; its full sequence is Elongation factor Ts (278 aa).

Positions 79–82 (TDFV) are involved in Mg(2+) ion dislocation from EF-Tu.

It belongs to the EF-Ts family.

It localises to the cytoplasm. In terms of biological role, associates with the EF-Tu.GDP complex and induces the exchange of GDP to GTP. It remains bound to the aminoacyl-tRNA.EF-Tu.GTP complex up to the GTP hydrolysis stage on the ribosome. The protein is Elongation factor Ts of Borrelia hermsii (strain HS1 / DAH).